The primary structure comprises 87 residues: MRNIMKHGMSKYLFTIFFLFSNSYAFAACQDCVTISGQWVNLSEVGIVVGDYHYGVTKDNKKFLLTDGSVNKAEKALILGTKLYVDT.

In Acyrthosiphon pisum secondary endosymbiont phage 1 (Bacteriophage APSE-1), this protein is Putative protein p8 (8).